The chain runs to 128 residues: RYamide neuropeptides (128 aa).

The signal sequence occupies residues 1–23; sequence MHARKLIVVLVYILTVLVSVAVS. Residues 26 to 29 constitute a propeptide that is removed on maturation; the sequence is YTSE. Y44 is modified (tyrosine amide). A propeptide spanning residues 47-63 is cleaved from the precursor; sequence GGPSPNNKENKVNIRPR. Y73 carries the post-translational modification Tyrosine amide. A propeptide spanning residues 77–128 is cleaved from the precursor; the sequence is SGWSPNASLVYPVSTPLCGLDEDLSCAYTGISDLYRCTPRKGESEEFTTSSN.

Its subcellular location is the secreted. Its function is as follows. Neuropeptides RYamide-1 and RYamide-2 are ligands for the G-protein coupled receptor RYa-R. RYamide-2 is the most potent activator of RYa-R. This is RYamide neuropeptides from Tribolium castaneum (Red flour beetle).